Consider the following 139-residue polypeptide: Protein archease (139 aa).

Ca(2+)-binding residues include aspartate 12, aspartate 138, and isoleucine 139.

The protein belongs to the archease family.

Its function is as follows. Activates the tRNA-splicing ligase complex by facilitating the enzymatic turnover of catalytic subunit RtcB. Acts by promoting the guanylylation of RtcB, a key intermediate step in tRNA ligation. Can also alter the NTP specificity of RtcB such that ATP, dGTP or ITP is used efficiently. This chain is Protein archease, found in Saccharolobus islandicus (strain M.16.27) (Sulfolobus islandicus).